Reading from the N-terminus, the 556-residue chain is Formate--tetrahydrofolate ligase (556 aa).

Position 65-72 (65-72 (TPAGEGKS)) interacts with ATP.

Belongs to the formate--tetrahydrofolate ligase family.

It carries out the reaction (6S)-5,6,7,8-tetrahydrofolate + formate + ATP = (6R)-10-formyltetrahydrofolate + ADP + phosphate. It functions in the pathway one-carbon metabolism; tetrahydrofolate interconversion. The sequence is that of Formate--tetrahydrofolate ligase from Streptococcus mutans serotype c (strain ATCC 700610 / UA159).